Here is a 48-residue protein sequence, read N- to C-terminus: ATP synthase protein 8 (48 aa).

Methionine 1 carries the post-translational modification N-formylmethionine. The Mitochondrial intermembrane segment spans residues 1–12 (MPQLIPFFFLNQ). A helical transmembrane segment spans residues 13-33 (LFYGYLALFALLVLVSWVILP). Topologically, residues 34 to 48 (YLLQLQIVRLLITKL) are mitochondrial matrix.

As to quaternary structure, F-type ATP synthases have 2 components, the catalytic core F(1) and the membrane-embedded component F(0), linked together by a central stalk and a peripheral stalk. The central stalk, also called rotor shaft, is often seen as part of F(1). The peripheral stalk is seen as part of F(0). F(0) contains the membrane channel next to the rotor. F-type ATP synthases form dimers but each monomer functions independently in ATP generation. The dimer consists of 18 different polypeptides: ATP1 (subunit alpha, part of F(1), 3 molecules per monomer), ATP2 (subunit beta, part of F(1), 3 molecules per monomer), ATP3 (subunit gamma, part of the central stalk), ATP4 (subunit b, part of the peripheral stalk), ATP5/OSCP (subunit 5/OSCP, part of the peripheral stalk), ATP6 (subunit a, part of the peripheral stalk), ATP7 (subunit d, part of the peripheral stalk), ATP8 (subunit 8, part of the peripheral stalk), OLI1 (subunit c, part of the rotor, 10 molecules per monomer), ATP14 (subunit h, part of the peripheral stalk), ATP15 (subunit epsilon, part of the central stalk), ATP16 (subunit delta, part of the central stalk), ATP17 (subunit f, part of the peripheral stalk), ATP18 (subunit i/j, part of the peripheral stalk). Dimer-specific subunits are ATP19 (subunit k, at interface between monomers), ATP20 (subunit g, at interface between monomers), TIM11 (subunit e, at interface between monomers). Also contains subunit L.

The protein resides in the mitochondrion inner membrane. Mitochondrial membrane ATP synthase (F(1)F(0) ATP synthase or Complex V) produces ATP from ADP in the presence of a proton gradient across the membrane which is generated by electron transport complexes of the respiratory chain. F-type ATP synthases consist of two structural domains, F(1) - containing the extramembraneous catalytic core, and F(0) - containing the membrane proton channel, linked together by a central stalk and a peripheral stalk. During catalysis, ATP synthesis in the catalytic domain of F(1) is coupled via a rotary mechanism of the central stalk subunits to proton translocation. Part of the complex F(0) domain. Minor subunit located with subunit a/ATP6 in the membrane. The protein is ATP synthase protein 8 of Pichia angusta (Yeast).